We begin with the raw amino-acid sequence, 255 residues long: Indole-3-glycerol phosphate synthase (255 aa).

This sequence belongs to the TrpC family.

It catalyses the reaction 1-(2-carboxyphenylamino)-1-deoxy-D-ribulose 5-phosphate + H(+) = (1S,2R)-1-C-(indol-3-yl)glycerol 3-phosphate + CO2 + H2O. It functions in the pathway amino-acid biosynthesis; L-tryptophan biosynthesis; L-tryptophan from chorismate: step 4/5. In Streptococcus pneumoniae serotype 2 (strain D39 / NCTC 7466), this protein is Indole-3-glycerol phosphate synthase.